The primary structure comprises 149 residues: Calmodulin (149 aa).

Ala-2 carries the N-acetylalanine modification. EF-hand domains are found at residues 8 to 43 (EQIAEFKEAFSLFDKDGDGTITTKELGTVMRSLGQN), 44 to 79 (PTEAELQDMINEVDTDGNGTIDFPEFLTMMARKMKE), 81 to 116 (DSEEEIREAFRVFDKDGNGFISAAELRHVMTNLGEK), and 117 to 149 (LTDEEVDEMIREADTDGDGQVNYEEFVGMMTSK). Ca(2+) is bound by residues Asp-21, Asp-23, Asp-25, Thr-27, Glu-32, Asp-57, Asp-59, Asn-61, Thr-63, Glu-68, Asp-94, Asp-96, Asn-98, and Glu-105. Position 116 is an N6,N6,N6-trimethyllysine (Lys-116). The Ca(2+) site is built by Asp-130, Asp-132, Asp-134, Gln-136, and Glu-141.

This sequence belongs to the calmodulin family.

Its function is as follows. Calmodulin mediates the control of a large number of enzymes, ion channels and other proteins by Ca(2+). Among the enzymes to be stimulated by the calmodulin-Ca(2+) complex are a number of protein kinases and phosphatases. The chain is Calmodulin from Suberites domuncula (Sponge).